Consider the following 345-residue polypeptide: Phosphoribosylformylglycinamidine cyclo-ligase (345 aa).

Belongs to the AIR synthase family.

The protein resides in the cytoplasm. The catalysed reaction is 2-formamido-N(1)-(5-O-phospho-beta-D-ribosyl)acetamidine + ATP = 5-amino-1-(5-phospho-beta-D-ribosyl)imidazole + ADP + phosphate + H(+). It functions in the pathway purine metabolism; IMP biosynthesis via de novo pathway; 5-amino-1-(5-phospho-D-ribosyl)imidazole from N(2)-formyl-N(1)-(5-phospho-D-ribosyl)glycinamide: step 2/2. This is Phosphoribosylformylglycinamidine cyclo-ligase from Escherichia fergusonii (strain ATCC 35469 / DSM 13698 / CCUG 18766 / IAM 14443 / JCM 21226 / LMG 7866 / NBRC 102419 / NCTC 12128 / CDC 0568-73).